Reading from the N-terminus, the 205-residue chain is uncharacterized protein (205 aa).

The next 3 helical transmembrane spans lie at 45–65 (LFFY…FLVI), 119–139 (VFWL…VTAF), and 144–164 (FEWM…LWGY).

This sequence belongs to the TVP23 family.

Its subcellular location is the membrane. This is an uncharacterized protein from Caenorhabditis elegans.